We begin with the raw amino-acid sequence, 1046 residues long: UDP-N-acetylglucosamine--peptide N-acetylglucosaminyltransferase 110 kDa subunit (1046 aa).

Ala2 is subject to N-acetylalanine. Residues Ser3 and Ser4 each carry the phosphoserine; by GSK3-beta; alternate modification. O-linked (GlcNAc) serine; alternate glycans are attached at residues Ser3 and Ser4. O-linked (GlcNAc) serine glycosylation is present at Asp10. Thr12 is a glycosylation site (O-linked (GlcNAc) threonine). O-linked (GlcNAc) serine glycosylation is present at Met18. Ser20 carries the phosphoserine modification. The TPR 1 repeat unit spans residues 21-54 (FQGLAELAHREYQAGDFEAAERHCMQLWRQEPDN). Glu38 is a glycosylation site (O-linked (GlcNAc) threonine). Residues Pro52 and Gly56 are each glycosylated (O-linked (GlcNAc) serine). TPR repeat units lie at residues 89–122 (AEAYSNLGNVYKERGQLQEAIEHYRHALRLKPDF), 123–156 (IDGYINLAAALVAAGDMEGAVQAYVSALQYNPDL), 157–190 (YCVRSDLGNLLKALGRLEEAKACYLKAIETQPNF), 191–224 (AVAWSNLGCVFNAQGEIWLAIHHFEKAVTLDPNF), 225–258 (LDAYINLGNVLKEARIFDRAVAAYLRALSLSPNH), 259–292 (AVVHGNLACVYYEQGLIDLAIDTYRRAIELQPHF), 293–326 (PDAYCNLANALKEKGSVAEAEDCYNTALRLCPTH), 327–360 (ADSLNNLANIKREQGNIEEAVRLYRKALEVFPEF), 361–394 (AAAHSNLASVLQQQGKLQEALMHYKEAIRISPTF), 395–428 (ADAYSNMGNTLKEMQDVQGALQCYTRAIQINPAF), and 429–462 (ADAHSNLASIHKDSGNIPEAIASYRTALKLKPDF). Residue Ser399 is glycosylated (O-linked (GlcNAc) serine; by autocatalysis). Thr454 is subject to Phosphothreonine; by AMPK. A TPR 13; truncated repeat occupies 463-473 (PDAYCNLAHCL). The short motif at 464–466 (DAY) is the DFP motif element. The Nuclear localization signal signature appears at 487-503 (KKLVSIVADQLEKNRLP). His508 functions as the Proton acceptor in the catalytic mechanism. UDP contacts are provided by residues Gln849, Lys852, 906–908 (APK), 911–914 (HVRR), 930–932 (HTT), and Asp935. At Tyr989 the chain carries Phosphotyrosine. Residues 991 to 1010 (KKVRGKVWKQRISSPLFNTK) are required for phosphatidylinositol 3,4,5-triphosphate binding.

It belongs to the glycosyltransferase 41 family. O-GlcNAc transferase subfamily. As to quaternary structure, monomer; may exist in different oligomerization states in cells. Homotrimer, oligomerizes via TPR repeats 6 and 7. Trimerization is not necessary for activity in vitro, however it increases affinity for UDP-GlcNAc. Component of a THAP1/THAP3-HCFC1-OGT complex. Component of the NSL complex at least composed of MOF/KAT8, KANSL1, KANSL2, KANSL3, MCRS1, PHF20, OGT1/OGT, WDR5 and HCFC1. Found in a complex with KIF5B, RHOT1, RHOT2 and TRAK1. Found in a complex composed of at least SINHCAF, SIN3A, HDAC1, SAP30, RBBP4, OGT and TET1. Component of a complex composed of KMT2E/MLL5 (isoform 3), OGT (isoform 1) and USP7; the complex stabilizes KMT2E/MLL5, preventing KMT2E/MLL5 ubiquitination and proteasomal-mediated degradation. Interacts (via TPRs 1-6) with SIN3A; the interaction mediates transcriptional repression in parallel with histone deacetylase. Interacts (via TPR 5-6) with TET1, TET2 and TET3. Interacts (via TPR repeats 6 and 7) with ATXN10. Interacts with NSD2. Interacts with PROSER1; this interaction mediates TET2 O-GlcNAcylation and stability by promoting the interaction between OGT and TET2. In terms of assembly, interacts with USP7. (Microbial infection) Interacts with human T-cell leukemia virus 1/HTLV-1 protein Tax; this interaction increases Tax interacting partner CREB1 O-GlcNAcylation. Post-translationally, ubiquitinated by the SCF(FBXO31) complex, leading to its proteasomal degradation. In terms of processing, phosphorylation on Ser-3 or Ser-4 by GSK3-beta positively regulates its activity. Phosphorylation at Thr-454 by AMPK promotes nuclear localization. Glycosylated via autocatalysis; O-GlcNAcylation at Ser-399 promotes nuclear localization. Post-translationally, glycosylated via autocatalysis; does not affect the enzyme activity but regulates substrate selectivity. Highly expressed in pancreas and to a lesser extent in skeletal muscle, heart, brain and placenta. Present in trace amounts in lung and liver.

Its subcellular location is the nucleus. It is found in the cytoplasm. The protein resides in the mitochondrion. The protein localises to the membrane. It localises to the cell membrane. Its subcellular location is the mitochondrion membrane. It is found in the cell projection. It catalyses the reaction L-seryl-[protein] + UDP-N-acetyl-alpha-D-glucosamine = 3-O-(N-acetyl-beta-D-glucosaminyl)-L-seryl-[protein] + UDP + H(+). The catalysed reaction is L-threonyl-[protein] + UDP-N-acetyl-alpha-D-glucosamine = 3-O-(N-acetyl-beta-D-glucosaminyl)-L-threonyl-[protein] + UDP + H(+). Its pathway is protein modification; protein glycosylation. With respect to regulation, subject to product inhibition by UDP. Its function is as follows. Catalyzes the transfer of a single N-acetylglucosamine from UDP-GlcNAc to a serine or threonine residue in cytoplasmic and nuclear proteins resulting in their modification with a beta-linked N-acetylglucosamine (O-GlcNAc). Glycosylates a large and diverse number of proteins including histone H2B, AKT1, AMPK, ATG4B, CAPRIN1, EZH2, FNIP1, GSDMD, KRT7, LMNA, LMNB1, LMNB2, RPTOR, HOXA1, PFKL, KMT2E/MLL5, MAPT/TAU, TET2, RBL2, RET, NOD2 and HCFC1. Can regulate their cellular processes via cross-talk between glycosylation and phosphorylation or by affecting proteolytic processing. Involved in insulin resistance in muscle and adipocyte cells via glycosylating insulin signaling components and inhibiting the 'Thr-308' phosphorylation of AKT1, enhancing IRS1 phosphorylation and attenuating insulin signaling. Involved in glycolysis regulation by mediating glycosylation of 6-phosphofructokinase PFKL, inhibiting its activity. Plays a key role in chromatin structure by mediating O-GlcNAcylation of 'Ser-112' of histone H2B: recruited to CpG-rich transcription start sites of active genes via its interaction with TET proteins (TET1, TET2 or TET3). As part of the NSL complex indirectly involved in acetylation of nucleosomal histone H4 on several lysine residues. O-GlcNAcylation of 'Ser-75' of EZH2 increases its stability, and facilitating the formation of H3K27me3 by the PRC2/EED-EZH2 complex. Stabilizes KMT2E/MLL5 by mediating its glycosylation, thereby preventing KMT2E/MLL5 ubiquitination. Regulates circadian oscillation of the clock genes and glucose homeostasis in the liver. Stabilizes clock proteins BMAL1 and CLOCK through O-glycosylation, which prevents their ubiquitination and subsequent degradation. Promotes the CLOCK-BMAL1-mediated transcription of genes in the negative loop of the circadian clock such as PER1/2 and CRY1/2. O-glycosylates HCFC1 and regulates its proteolytic processing and transcriptional activity. Component of a THAP1/THAP3-HCFC1-OGT complex that is required for the regulation of the transcriptional activity of RRM1. Regulates mitochondrial motility in neurons by mediating glycosylation of TRAK1. Promotes autophagy by mediating O-glycosylation of ATG4B. Acts as a regulator of mTORC1 signaling by mediating O-glycosylation of RPTOR and FNIP1: O-GlcNAcylation of RPTOR in response to glucose sufficiency promotes activation of the mTORC1 complex. The mitochondrial isoform (mOGT) is cytotoxic and triggers apoptosis in several cell types including INS1, an insulinoma cell line. In terms of biological role, has N-acetylglucosaminyltransferase activity: glycosylates proteins, such as HNRNPU, NEUROD1, NUP62 and PDCD6IP. Displays specific substrate selectivity compared to other isoforms. This Homo sapiens (Human) protein is UDP-N-acetylglucosamine--peptide N-acetylglucosaminyltransferase 110 kDa subunit.